A 198-amino-acid polypeptide reads, in one-letter code: HTH-type transcriptional regulator BetI (198 aa).

An HTH tetR-type domain is found at 8-68 (PLRRRELIDA…ATMRHLLREL (61 aa)). Residues 31 to 50 (TVAQIAHEAGVSPALAHHYF) constitute a DNA-binding region (H-T-H motif).

Its pathway is amine and polyamine biosynthesis; betaine biosynthesis via choline pathway [regulation]. In terms of biological role, repressor involved in the biosynthesis of the osmoprotectant glycine betaine. It represses transcription of the choline transporter BetT and the genes of BetAB involved in the synthesis of glycine betaine. The sequence is that of HTH-type transcriptional regulator BetI from Brucella abortus (strain 2308).